We begin with the raw amino-acid sequence, 313 residues long: Ribosomal RNA small subunit methyltransferase H (313 aa).

S-adenosyl-L-methionine-binding positions include 35-37 (GGH), D55, F81, D103, and Q110.

This sequence belongs to the methyltransferase superfamily. RsmH family.

Its subcellular location is the cytoplasm. The enzyme catalyses cytidine(1402) in 16S rRNA + S-adenosyl-L-methionine = N(4)-methylcytidine(1402) in 16S rRNA + S-adenosyl-L-homocysteine + H(+). Specifically methylates the N4 position of cytidine in position 1402 (C1402) of 16S rRNA. The sequence is that of Ribosomal RNA small subunit methyltransferase H from Pseudomonas syringae pv. syringae (strain B728a).